Here is a 755-residue protein sequence, read N- to C-terminus: Polyribonucleotide nucleotidyltransferase (755 aa).

Mg(2+)-binding residues include Asp-493 and Asp-499. Residues 560-619 (PRIMTIQIPVDKIGALIGPGGKTIRNICETTGAQIDIEDDGRVFITTPDGAAARQAISMI) form the KH domain. In terms of domain architecture, S1 motif spans 629 to 698 (GDIFLGKVVS…TTGKISLSRR (70 aa)). The segment at 699–755 (AVLTGETPEERKAAGAAPRPRPREEQRGGRDEPRSLRDELRGPRREGDRPRPRRRDD) is disordered. The segment covering 719–755 (RPREEQRGGRDEPRSLRDELRGPRREGDRPRPRRRDD) has biased composition (basic and acidic residues).

This sequence belongs to the polyribonucleotide nucleotidyltransferase family. Mg(2+) is required as a cofactor.

Its subcellular location is the cytoplasm. The enzyme catalyses RNA(n+1) + phosphate = RNA(n) + a ribonucleoside 5'-diphosphate. Its function is as follows. Involved in mRNA degradation. Catalyzes the phosphorolysis of single-stranded polyribonucleotides processively in the 3'- to 5'-direction. This is Polyribonucleotide nucleotidyltransferase from Chloroflexus aurantiacus (strain ATCC 29366 / DSM 635 / J-10-fl).